Consider the following 666-residue polypeptide: MQHVNHSSFDKASKAGFIIALGIVYGDIGTSPLYTMQSLVENQGGISSVTESFILGSISLIIWTLTLITTIKYVLVALKADNHHEGGIFSLYTLVRKMTPWLIVPAVIGGATLLSDGALTPAVTVTSAVEGLKVVPSLQHIFQNQSNVIFATLFILLLLFAIQRFGTGVIGKLFGPIMFIWFAFLGISGFLNSFAHPEVFKAINPYYGLKLLFSPENHKGIFILGSIFLATTGAEALYSDLGHVGRGNIHVSWPFVKVAIILSYCGQGAWILANKNAGNELNPFFASIPSQFTMHVVILATLAAIIASQALISGSFTLVSEAMRLKIFPQFRSTYPGDNIGQTYIPVINWFLFAITTSIVLLFKTSAHMEAAYGLAITITMLMTTILLSFFLIQKGVKRGLVLLMMIFFGILEGIFFLASAVKFMHGGYVVVIIAVAIIFIMTIWYKGSKIVSRYVKLLDLKDYIGQLDKLRHDHRYPIYHTNVVYLTNRMEGDMIDKSIMYSILDKRPKKAQVYWFVNIKVTDEPYTAEYKVDMMGTDFIVKVELYLGFKMRQTVSRYLRTIVEELLESGRLPKQGKTYSVRPDSKVGDFRFIVLDERFSSSQNLKPGERFVMLMKSSIKHWTATPIRWFGLQFSEVTTEVVPLIFTANRGLPIKEKIELTTTGD.

The next 12 membrane-spanning stretches (helical) occupy residues 16–36 (GFIIALGIVYGDIGTSPLYTM), 58–78 (ISLIIWTLTLITTIKYVLVAL), 99–119 (TPWLIVPAVIGGATLLSDGAL), 141–161 (IFQNQSNVIFATLFILLLLFA), 167–187 (TGVIGKLFGPIMFIWFAFLGI), 221–241 (IFILGSIFLATTGAEALYSDL), 253–273 (WPFVKVAIILSYCGQGAWILA), 292–312 (FTMHVVILATLAAIIASQALI), 343–363 (TYIPVINWFLFAITTSIVLLF), 373–393 (YGLAITITMLMTTILLSFFLI), 402–422 (VLLMMIFFGILEGIFFLASAV), and 424–444 (FMHGGYVVVIIAVAIIFIMTI).

It belongs to the HAK/KUP transporter (TC 2.A.72) family.

The protein resides in the cell membrane. It catalyses the reaction K(+)(in) + H(+)(in) = K(+)(out) + H(+)(out). Functionally, transport of potassium into the cell. Likely operates as a K(+):H(+) symporter. The polypeptide is Probable potassium transport system protein Kup (Streptococcus agalactiae serotype Ia (strain ATCC 27591 / A909 / CDC SS700)).